An 816-amino-acid polypeptide reads, in one-letter code: Leucine--tRNA ligase (816 aa).

Positions 42–52 (PYPSGSLHMGH) match the 'HIGH' region motif. The 'KMSKS' region motif lies at 574–578 (KMSKS). Lys577 provides a ligand contact to ATP.

Belongs to the class-I aminoacyl-tRNA synthetase family.

The protein localises to the cytoplasm. The enzyme catalyses tRNA(Leu) + L-leucine + ATP = L-leucyl-tRNA(Leu) + AMP + diphosphate. This chain is Leucine--tRNA ligase, found in Ruthia magnifica subsp. Calyptogena magnifica.